We begin with the raw amino-acid sequence, 388 residues long: Interferon alpha/beta receptor 1b (388 aa).

2 consecutive Fibronectin type-III domains span residues 5–102 (LPQP…FCPD) and 109–211 (PPSR…TEGD). A helical transmembrane segment spans residues 217-237 (IFLYFLVSMMVCFLLVLLSSY). Positions 308 to 357 (TAPPSELEQDSGRHIRQDSGDSGIYSTEGGSAQQGRSGGEPIRRDQEVDS) are disordered. Positions 317–326 (DSGRHIRQDS) are enriched in basic and acidic residues. The segment covering 331–342 (IYSTEGGSAQQG) has biased composition (polar residues).

This sequence belongs to the type II cytokine receptor family. As to quaternary structure, heterodimer with IFNAR2; forming the receptor for type I interferon.

It is found in the cell membrane. It localises to the cytoplasm. The protein resides in the perinuclear region. Together with IFNAR2, forms the heterodimeric receptor for type I interferons (including interferons alpha, beta, epsilon, omega and kappa). Type I interferon binding activates the JAK-STAT signaling cascade, resulting in transcriptional activation or repression of interferon-regulated genes that encode the effectors of the interferon response. Mechanistically, type I interferon-binding brings the IFNAR1 and IFNAR2 subunits into close proximity with one another, driving their associated Janus kinases (JAKs) (TYK2 bound to IFNAR1 and JAK1 bound to IFNAR2) to cross-phosphorylate one another. The activated kinases phosphorylate specific tyrosine residues on the intracellular domains of IFNAR1 and IFNAR2, forming docking sites for the STAT transcription factors. STAT proteins are then phosphorylated by the JAKs, promoting their translocation into the nucleus to regulate expression of interferon-regulated genes. The protein is Interferon alpha/beta receptor 1b of Oncorhynchus mykiss (Rainbow trout).